The primary structure comprises 532 residues: uncharacterized protein (532 aa).

The next 6 membrane-spanning stretches (helical) occupy residues 7–26 (HSSY…LGRI), 30–52 (GLSL…GVII), 59–77 (FGLV…PGFF), 87–109 (LIII…KYAF), 116–134 (VVGL…AVAI), and 139–161 (SPLA…ILFV). RCK C-terminal domains lie at 179 to 262 (LEIE…LVGE) and 263 to 346 (REEG…LLGN). A run of 4 helical transmembrane segments spans residues 356 to 378 (FFPI…SFPG), 388 to 410 (GGVL…LWSM), 446 to 468 (GLLL…AFVG), and 509 to 531 (YATV…ATVV).

This sequence belongs to the AAE transporter (TC 2.A.81) family.

It localises to the cell membrane. This is an uncharacterized protein from Bacteroides fragilis (strain YCH46).